Consider the following 264-residue polypeptide: Spermidine/putrescine transport system permease protein PotC (264 aa).

A run of 6 helical transmembrane segments spans residues 10 to 30 (FMTA…VNSF), 66 to 86 (MAVF…VALY), 109 to 129 (IVMA…LGFW), 131 to 151 (LLFS…YSRL), 176 to 196 (IILP…FTLS), and 232 to 252 (ALAT…QLIA). An ABC transmembrane type-1 domain is found at 60–248 (AQHSLTMAVF…VLSLVMVIAS (189 aa)).

The protein belongs to the binding-protein-dependent transport system permease family. CysTW subfamily.

It is found in the cell inner membrane. In terms of biological role, required for the activity of the bacterial periplasmic transport system of putrescine and spermidine. The protein is Spermidine/putrescine transport system permease protein PotC (potC) of Shigella flexneri.